Reading from the N-terminus, the 786-residue chain is Endonuclease MutS2 (786 aa).

G335–T342 is a binding site for ATP. The region spanning L711–K786 is the Smr domain.

This sequence belongs to the DNA mismatch repair MutS family. MutS2 subfamily. In terms of assembly, homodimer. Binds to stalled ribosomes, contacting rRNA.

Its function is as follows. Endonuclease that is involved in the suppression of homologous recombination and thus may have a key role in the control of bacterial genetic diversity. In terms of biological role, acts as a ribosome collision sensor, splitting the ribosome into its 2 subunits. Detects stalled/collided 70S ribosomes which it binds and splits by an ATP-hydrolysis driven conformational change. Acts upstream of the ribosome quality control system (RQC), a ribosome-associated complex that mediates the extraction of incompletely synthesized nascent chains from stalled ribosomes and their subsequent degradation. Probably generates substrates for RQC. The protein is Endonuclease MutS2 of Bacillus cereus (strain B4264).